A 118-amino-acid polypeptide reads, in one-letter code: Large ribosomal subunit protein uL18 (118 aa).

The tract at residues 1 to 25 is disordered; that stretch reads MISKPDKNKLRQKRHRRVRGKLSGT. Basic residues predominate over residues 10 to 20; it reads LRQKRHRRVRG.

The protein belongs to the universal ribosomal protein uL18 family. In terms of assembly, part of the 50S ribosomal subunit; part of the 5S rRNA/L5/L18/L25 subcomplex. Contacts the 5S and 23S rRNAs.

Its function is as follows. This is one of the proteins that bind and probably mediate the attachment of the 5S RNA into the large ribosomal subunit, where it forms part of the central protuberance. The sequence is that of Large ribosomal subunit protein uL18 from Streptococcus pneumoniae (strain Hungary19A-6).